The following is a 168-amino-acid chain: Cyclic pyranopterin monophosphate synthase (168 aa).

Substrate contacts are provided by residues 75 to 77 and 115 to 116; these read MCH and ME. Residue D130 is part of the active site.

It belongs to the MoaC family. As to quaternary structure, homohexamer; trimer of dimers.

It catalyses the reaction (8S)-3',8-cyclo-7,8-dihydroguanosine 5'-triphosphate = cyclic pyranopterin phosphate + diphosphate. It participates in cofactor biosynthesis; molybdopterin biosynthesis. Its function is as follows. Catalyzes the conversion of (8S)-3',8-cyclo-7,8-dihydroguanosine 5'-triphosphate to cyclic pyranopterin monophosphate (cPMP). The polypeptide is Cyclic pyranopterin monophosphate synthase (Bacillus licheniformis (strain ATCC 14580 / DSM 13 / JCM 2505 / CCUG 7422 / NBRC 12200 / NCIMB 9375 / NCTC 10341 / NRRL NRS-1264 / Gibson 46)).